The sequence spans 158 residues: 2-C-methyl-D-erythritol 2,4-cyclodiphosphate synthase (158 aa).

A divalent metal cation contacts are provided by D9 and H11. 4-CDP-2-C-methyl-D-erythritol 2-phosphate-binding positions include 9–11 (DVH) and 35–36 (HS). H43 provides a ligand contact to a divalent metal cation. 4-CDP-2-C-methyl-D-erythritol 2-phosphate is bound by residues 57-59 (DIG), 62-66 (FPDTD), 133-136 (TTTE), F140, and R143.

It belongs to the IspF family. As to quaternary structure, homotrimer. Requires a divalent metal cation as cofactor.

It catalyses the reaction 4-CDP-2-C-methyl-D-erythritol 2-phosphate = 2-C-methyl-D-erythritol 2,4-cyclic diphosphate + CMP. Its pathway is isoprenoid biosynthesis; isopentenyl diphosphate biosynthesis via DXP pathway; isopentenyl diphosphate from 1-deoxy-D-xylulose 5-phosphate: step 4/6. Its function is as follows. Involved in the biosynthesis of isopentenyl diphosphate (IPP) and dimethylallyl diphosphate (DMAPP), two major building blocks of isoprenoid compounds. Catalyzes the conversion of 4-diphosphocytidyl-2-C-methyl-D-erythritol 2-phosphate (CDP-ME2P) to 2-C-methyl-D-erythritol 2,4-cyclodiphosphate (ME-CPP) with a corresponding release of cytidine 5-monophosphate (CMP). The sequence is that of 2-C-methyl-D-erythritol 2,4-cyclodiphosphate synthase from Geobacillus kaustophilus (strain HTA426).